We begin with the raw amino-acid sequence, 492 residues long: Glutamate--cysteine ligase A, chloroplastic (492 aa).

The cysteines at positions 156 and 376 are disulfide-linked.

This sequence belongs to the carboxylate-amine ligase family. Glutamate--cysteine ligase type 2 subfamily. As to quaternary structure, homodimer or monomer when oxidized or reduced, respectively. In terms of processing, the Cys-156-Cys-376 disulfide bridge is known to modulate the enzyme activity according to the redox status. The oxidized form constitutes the active enzyme.

The protein resides in the plastid. The protein localises to the chloroplast. It catalyses the reaction L-cysteine + L-glutamate + ATP = gamma-L-glutamyl-L-cysteine + ADP + phosphate + H(+). The protein operates within sulfur metabolism; glutathione biosynthesis; glutathione from L-cysteine and L-glutamate: step 1/2. The chain is Glutamate--cysteine ligase A, chloroplastic (GSH1-1) from Oryza sativa subsp. japonica (Rice).